Reading from the N-terminus, the 263-residue chain is Imidazole glycerol phosphate synthase subunit HisF (263 aa).

Catalysis depends on residues Asp11 and Asp130.

This sequence belongs to the HisA/HisF family. As to quaternary structure, heterodimer of HisH and HisF.

The protein resides in the cytoplasm. It carries out the reaction 5-[(5-phospho-1-deoxy-D-ribulos-1-ylimino)methylamino]-1-(5-phospho-beta-D-ribosyl)imidazole-4-carboxamide + L-glutamine = D-erythro-1-(imidazol-4-yl)glycerol 3-phosphate + 5-amino-1-(5-phospho-beta-D-ribosyl)imidazole-4-carboxamide + L-glutamate + H(+). Its pathway is amino-acid biosynthesis; L-histidine biosynthesis; L-histidine from 5-phospho-alpha-D-ribose 1-diphosphate: step 5/9. IGPS catalyzes the conversion of PRFAR and glutamine to IGP, AICAR and glutamate. The HisF subunit catalyzes the cyclization activity that produces IGP and AICAR from PRFAR using the ammonia provided by the HisH subunit. This chain is Imidazole glycerol phosphate synthase subunit HisF, found in Synechococcus sp. (strain CC9311).